The sequence spans 879 residues: Alanine--tRNA ligase (879 aa).

Zn(2+)-binding residues include histidine 567, histidine 571, cysteine 669, and histidine 673.

The protein belongs to the class-II aminoacyl-tRNA synthetase family. It depends on Zn(2+) as a cofactor.

It localises to the cytoplasm. It carries out the reaction tRNA(Ala) + L-alanine + ATP = L-alanyl-tRNA(Ala) + AMP + diphosphate. Functionally, catalyzes the attachment of alanine to tRNA(Ala) in a two-step reaction: alanine is first activated by ATP to form Ala-AMP and then transferred to the acceptor end of tRNA(Ala). Also edits incorrectly charged Ser-tRNA(Ala) and Gly-tRNA(Ala) via its editing domain. This is Alanine--tRNA ligase from Levilactobacillus brevis (strain ATCC 367 / BCRC 12310 / CIP 105137 / JCM 1170 / LMG 11437 / NCIMB 947 / NCTC 947) (Lactobacillus brevis).